The sequence spans 510 residues: MNKELVLVVDFGGQYNQLIARRVRENRVYCEIVPYTTSIEDIKEKAPKGIIFTGGPNSVYGENAPRVQKELFDLGIPVLGICYGDQLMAHSLEGEVTSPEKREYGKTDVNLDNSSLLFKDMKEKDQCWMSHTDYISKVPKGFKIIATTDECPCAAMENAEKKLYGVQFHPEVEHTLFGKKMLKNFLFNVCNLKGDWSMSSFAEQQIKAIKEKVGDKKVICALSGGVDSSVAAVIVHKAIGKQLTCVFVDHGLLRKDEGDQVERIFKDQFDMNLIRVNAQDRFLGKLKGVSDPERKRKIIGEEFIRVFEEEAKKLGDISFLVQGTIYPDIVESGTNTSATIKSHHNVGGLPEDMEFKLIEPLRELFKDEVRAVGEELGIPHKLVWRQPFPGPGLAIRVLGEVTEEKLAITREADAIFREEIAKAGLEEKIWQYFACLPNIQSVGVMGDERTYCHTIALRAVTSSDAMTSDWARIPYEVLDKVSRRIVNEVKEVNRIVYDVTSKPPATIEWE.

One can recognise a Glutamine amidotransferase type-1 domain in the interval 5–195; the sequence is LVLVVDFGGQ…LFNVCNLKGD (191 aa). Cys-82 acts as the Nucleophile in catalysis. Catalysis depends on residues His-169 and Glu-171. Positions 196–385 constitute a GMPS ATP-PPase domain; sequence WSMSSFAEQQ…LGIPHKLVWR (190 aa). ATP is bound at residue 223-229; that stretch reads SGGVDSS.

Homodimer.

The enzyme catalyses XMP + L-glutamine + ATP + H2O = GMP + L-glutamate + AMP + diphosphate + 2 H(+). It participates in purine metabolism; GMP biosynthesis; GMP from XMP (L-Gln route): step 1/1. Catalyzes the synthesis of GMP from XMP. In Clostridium botulinum (strain ATCC 19397 / Type A), this protein is GMP synthase [glutamine-hydrolyzing].